Here is a 215-residue protein sequence, read N- to C-terminus: Probable transaldolase (215 aa).

Lysine 83 acts as the Schiff-base intermediate with substrate in catalysis.

Belongs to the transaldolase family. Type 3B subfamily.

Its subcellular location is the cytoplasm. It catalyses the reaction D-sedoheptulose 7-phosphate + D-glyceraldehyde 3-phosphate = D-erythrose 4-phosphate + beta-D-fructose 6-phosphate. It participates in carbohydrate degradation; pentose phosphate pathway; D-glyceraldehyde 3-phosphate and beta-D-fructose 6-phosphate from D-ribose 5-phosphate and D-xylulose 5-phosphate (non-oxidative stage): step 2/3. In terms of biological role, transaldolase is important for the balance of metabolites in the pentose-phosphate pathway. The protein is Probable transaldolase of Desulforudis audaxviator (strain MP104C).